Consider the following 258-residue polypeptide: Imidazole glycerol phosphate synthase subunit HisF (258 aa).

Residues Asp-11 and Asp-130 contribute to the active site.

Belongs to the HisA/HisF family. In terms of assembly, heterodimer of HisH and HisF.

It localises to the cytoplasm. It carries out the reaction 5-[(5-phospho-1-deoxy-D-ribulos-1-ylimino)methylamino]-1-(5-phospho-beta-D-ribosyl)imidazole-4-carboxamide + L-glutamine = D-erythro-1-(imidazol-4-yl)glycerol 3-phosphate + 5-amino-1-(5-phospho-beta-D-ribosyl)imidazole-4-carboxamide + L-glutamate + H(+). It functions in the pathway amino-acid biosynthesis; L-histidine biosynthesis; L-histidine from 5-phospho-alpha-D-ribose 1-diphosphate: step 5/9. In terms of biological role, IGPS catalyzes the conversion of PRFAR and glutamine to IGP, AICAR and glutamate. The HisF subunit catalyzes the cyclization activity that produces IGP and AICAR from PRFAR using the ammonia provided by the HisH subunit. This Salmonella arizonae (strain ATCC BAA-731 / CDC346-86 / RSK2980) protein is Imidazole glycerol phosphate synthase subunit HisF.